The sequence spans 395 residues: Elongation factor Tu (395 aa).

In terms of domain architecture, tr-type G spans lysine 10 to glutamate 204. Residues glycine 19–threonine 26 are G1. Position 19–26 (glycine 19–threonine 26) interacts with GTP. Threonine 26 contributes to the Mg(2+) binding site. The tract at residues glycine 60–asparagine 64 is G2. The G3 stretch occupies residues aspartate 81–glycine 84. Residues aspartate 81–histidine 85 and asparagine 136–aspartate 139 each bind GTP. The interval asparagine 136–aspartate 139 is G4. The interval serine 174–leucine 176 is G5.

The protein belongs to the TRAFAC class translation factor GTPase superfamily. Classic translation factor GTPase family. EF-Tu/EF-1A subfamily. Monomer.

It is found in the cytoplasm. It catalyses the reaction GTP + H2O = GDP + phosphate + H(+). Functionally, GTP hydrolase that promotes the GTP-dependent binding of aminoacyl-tRNA to the A-site of ribosomes during protein biosynthesis. The chain is Elongation factor Tu from Staphylococcus saprophyticus subsp. saprophyticus (strain ATCC 15305 / DSM 20229 / NCIMB 8711 / NCTC 7292 / S-41).